Consider the following 689-residue polypeptide: Glycine--tRNA ligase beta subunit (689 aa).

It belongs to the class-II aminoacyl-tRNA synthetase family. As to quaternary structure, tetramer of two alpha and two beta subunits.

It localises to the cytoplasm. It catalyses the reaction tRNA(Gly) + glycine + ATP = glycyl-tRNA(Gly) + AMP + diphosphate. This Coxiella burnetii (strain RSA 331 / Henzerling II) protein is Glycine--tRNA ligase beta subunit.